The following is a 429-amino-acid chain: Ribosomal RNA small subunit methyltransferase B (429 aa).

Residues 254 to 260 (CAAPGGK), aspartate 277, aspartate 303, and aspartate 322 contribute to the S-adenosyl-L-methionine site. Cysteine 375 acts as the Nucleophile in catalysis.

It belongs to the class I-like SAM-binding methyltransferase superfamily. RsmB/NOP family.

The protein localises to the cytoplasm. It catalyses the reaction cytidine(967) in 16S rRNA + S-adenosyl-L-methionine = 5-methylcytidine(967) in 16S rRNA + S-adenosyl-L-homocysteine + H(+). Its function is as follows. Specifically methylates the cytosine at position 967 (m5C967) of 16S rRNA. This Escherichia coli (strain UTI89 / UPEC) protein is Ribosomal RNA small subunit methyltransferase B.